The following is a 429-amino-acid chain: 3-phosphoshikimate 1-carboxyvinyltransferase (429 aa).

3-phosphoshikimate contacts are provided by lysine 11, serine 12, and arginine 16. Phosphoenolpyruvate is bound at residue lysine 11. Glycine 82 and arginine 110 together coordinate phosphoenolpyruvate. Serine 155, glutamine 157, aspartate 302, and lysine 329 together coordinate 3-phosphoshikimate. Glutamine 157 lines the phosphoenolpyruvate pocket. Aspartate 302 functions as the Proton acceptor in the catalytic mechanism. Positions 333 and 385 each coordinate phosphoenolpyruvate.

It belongs to the EPSP synthase family. As to quaternary structure, monomer.

It localises to the cytoplasm. It catalyses the reaction 3-phosphoshikimate + phosphoenolpyruvate = 5-O-(1-carboxyvinyl)-3-phosphoshikimate + phosphate. It functions in the pathway metabolic intermediate biosynthesis; chorismate biosynthesis; chorismate from D-erythrose 4-phosphate and phosphoenolpyruvate: step 6/7. In terms of biological role, catalyzes the transfer of the enolpyruvyl moiety of phosphoenolpyruvate (PEP) to the 5-hydroxyl of shikimate-3-phosphate (S3P) to produce enolpyruvyl shikimate-3-phosphate and inorganic phosphate. The polypeptide is 3-phosphoshikimate 1-carboxyvinyltransferase (Helicobacter pylori (strain J99 / ATCC 700824) (Campylobacter pylori J99)).